The following is a 297-amino-acid chain: Protein AKTIP homolog (297 aa).

The tract at residues 13–75 (FLSDLDEKSS…QRSPSGSSPE (63 aa)) is disordered. A compositionally biased stretch (basic and acidic residues) spans 17–42 (LDEKSSSSPHDEKKPGDGREVREEKS). Residues 59 to 75 (MNLSIARQRSPSGSSPE) are compositionally biased toward polar residues. Residues 84-232 (FLEYTLMAEY…VNECLRRCHN (149 aa)) form the UBC core domain.

It belongs to the ubiquitin-conjugating enzyme family. FTS subfamily.

This is Protein AKTIP homolog from Nematostella vectensis (Starlet sea anemone).